A 44-amino-acid polypeptide reads, in one-letter code: GKVWDWIKSTAKKLWNSEPVKELKNTALNAAKNFVAEKIGATPS.

In terms of tissue distribution, expressed by the venom gland.

The protein resides in the secreted. It localises to the target cell membrane. At high concentrations, acts as a pore former in cellular membranes and causes the leakage of the cells. At submicromolar concentrations, degranulates granulocytes and has a weak hemolytic activity against human erythrocytes. Also strongly inhibits the production of superoxide anions. Has a strong antibacterial activity against Gram-negative bacteria but is less active against Gram-positive bacteria. Also has antifungal activity. In Opistophthalmus carinatus (African yellow leg scorpion), this protein is Opistoporin-2.